Consider the following 473-residue polypeptide: H(+)/Cl(-) exchange transporter ClcA (473 aa).

Topologically, residues 1-32 are cytoplasmic; sequence MKTDTPSLETPQAARLRRRQLIRQLLERDKTP. A helical transmembrane segment spans residues 33 to 69; that stretch reads LAILFMAAVVGTLVGLAAVAFDKGVAWLQNQRMGALV. Topologically, residues 70–76 are periplasmic; the sequence is HTADNYP. The helical transmembrane segment at 77 to 100 threads the bilayer; the sequence is LLLTVAFLCSAVLAMFGYFLVRKY. Residues 106-110 carry the Selectivity filter part_1 motif; it reads GSGIP. Serine 107 is a chloride binding site. The helical intramembrane region spans 109–116; sequence IPEIEGAL. Residues 117-123 lie on the Cytoplasmic side of the membrane; it reads EDQRPVR. The next 2 membrane-spanning stretches (helical) occupy residues 124–141 and 148–166; these read WWRV…TLGG and EGPT…LDIF. The Selectivity filter part_2 motif lies at 146–150; sequence GREGP. At 167 to 176 the chain is on the cytoplasmic side; it reads RLKGDEARHT. 2 consecutive intramembrane regions (helical) follow at residues 177-189 and 193-201; these read LLAT…LAAA and PLAGILFII. The Cytoplasmic portion of the chain corresponds to 202–214; the sequence is EEMRPQFRYTLIS. A helical membrane pass occupies residues 215–232; the sequence is IKAVFIGVIMSTIMYRIF. At 233 to 252 the chain is on the periplasmic side; it reads NHEVALIDVGKLSDAPLNTQ. Residues 253–281 traverse the membrane as a helical segment; that stretch reads WLYLILGIIFGIFGPIFNKWVLGMQDLLH. The Cytoplasmic portion of the chain corresponds to 282–287; sequence RVHGGN. Residues 288-309 traverse the membrane as a helical segment; sequence ITKWVLMGGAIGGLCGLLGFVA. At 310–329 the chain is on the periplasmic side; that stretch reads PATSGGGFNLIPIATAGNFS. 2 helical membrane passes run 330 to 349 and 355 to 376; these read MGML…LCFS and GIFA…MVVV. A Selectivity filter part_3 motif is present at residues 355 to 359; it reads GIFAP. Residues isoleucine 356 and phenylalanine 357 each coordinate chloride. Residues 377-386 are Periplasmic-facing; that stretch reads ELFPQYHLEA. Residues 387–401 constitute an intramembrane region (helical); it reads GTFAIAGMGALLAAS. Positions 402–404 form an intramembrane region, note=Loop between two helices; the sequence is IRA. The helical intramembrane region spans 405–416; the sequence is PLTGIILVLEMT. The note=Loop between two helices intramembrane region spans 417 to 421; sequence DNYQL. The chain crosses the membrane as a helical span at residues 422–438; sequence ILPMIITGLGATLLAQF. The Cytoplasmic portion of the chain corresponds to 439-473; the sequence is TGGKPLYSAILARTLAKQEAEQLARSKAASASENT. Tyrosine 445 contributes to the chloride binding site.

Belongs to the chloride channel (TC 2.A.49) family. ClcA subfamily. As to quaternary structure, homodimer.

It is found in the cell inner membrane. The enzyme catalyses 2 chloride(in) + H(+)(out) = 2 chloride(out) + H(+)(in). Proton-coupled chloride transporter. Functions as antiport system and exchanges two chloride ions for 1 proton. Probably acts as an electrical shunt for an outwardly-directed proton pump that is linked to amino acid decarboxylation, as part of the extreme acid resistance (XAR) response. The chain is H(+)/Cl(-) exchange transporter ClcA from Shigella boydii serotype 18 (strain CDC 3083-94 / BS512).